The primary structure comprises 1744 residues: DNA-directed RNA polymerase I subunit RPA1 (1744 aa).

The Zn(2+) site is built by cysteine 56, cysteine 69, and histidine 72. Residues aspartate 597, aspartate 599, and aspartate 601 each coordinate Mg(2+). The interval 953–965 (PAEYTIHAMAGRD) is bridging helix. A disordered region spans residues 1333–1484 (VPREKESGDG…RDGTDWGGTS (152 aa)). Composition is skewed to gly residues over residues 1341–1354 (DGSG…GGSG) and 1366–1376 (DDGGGPLGGTF). The segment covering 1464–1478 (RDAEDGGEMQDRDGT) has biased composition (basic and acidic residues).

Belongs to the RNA polymerase beta' chain family. Component of the RNA polymerase I (Pol I) complex consisting of at least 13 subunits. Phosphorylated.

It localises to the nucleus. The protein localises to the nucleolus. It carries out the reaction RNA(n) + a ribonucleoside 5'-triphosphate = RNA(n+1) + diphosphate. Its function is as follows. DNA-dependent RNA polymerase catalyzes the transcription of DNA into RNA using the four ribonucleoside triphosphates as substrates. Largest and catalytic core component of RNA polymerase I which synthesizes ribosomal RNA precursors. Forms the polymerase active center together with the second largest subunit. A single stranded DNA template strand of the promoter is positioned within the central active site cleft of Pol I. A bridging helix emanates from RPA1 and crosses the cleft near the catalytic site and is thought to promote translocation of Pol I by acting as a ratchet that moves the RNA-DNA hybrid through the active site by switching from straight to bent conformations at each step of nucleotide addition. This is DNA-directed RNA polymerase I subunit RPA1 (TRP11) from Trypanosoma brucei brucei.